Reading from the N-terminus, the 54-residue chain is Ovomucoid (54 aa).

Positions 4-54 constitute a Kazal-like domain; the sequence is VNCSDYPKPVCSLLYMPLCGSDNKTYGNKCNFCNAVADSNGTLTLSHFGKC. Disulfide bonds link cysteine 6/cysteine 36, cysteine 14/cysteine 33, and cysteine 22/cysteine 54. A glycan (N-linked (GlcNAc...) asparagine) is linked at asparagine 43.

It is found in the secreted. The sequence is that of Ovomucoid from Geococcyx californianus (Greater roadrunner).